The primary structure comprises 643 residues: COP9 signalosome complex subunit 10 (643 aa).

Acidic residues predominate over residues M1 to D33. The disordered stretch occupies residues M1–R37. Residues C331–H517 enclose the PCI domain. The span at D573–S584 shows a compositional bias: polar residues. The tract at residues D573–P594 is disordered.

Component of a COP9 signalosome-like (CSN) complex.

It localises to the cytoplasm. It is found in the nucleus. Functionally, component of the COP9 signalosome (CSN) complex that acts as an regulator of the ubiquitin (Ubl) conjugation pathway by mediating the deneddylation of the cullin subunit of SCF-type E3 ubiquitin-protein ligase complexes. The CSN complex is involved in the regulation of the mating pheromone response. This chain is COP9 signalosome complex subunit 10 (RRI2), found in Candida glabrata (strain ATCC 2001 / BCRC 20586 / JCM 3761 / NBRC 0622 / NRRL Y-65 / CBS 138) (Yeast).